We begin with the raw amino-acid sequence, 415 residues long: Tyrosine--tRNA ligase (415 aa).

Tyr40 serves as a coordination point for L-tyrosine. Residues 45 to 54 carry the 'HIGH' region motif; the sequence is ATAKSLHVGS. 2 residues coordinate L-tyrosine: Tyr178 and Gln182. A 'KMSKS' region motif is present at residues 238–242; that stretch reads KMGKS. Lys241 is an ATP binding site. In terms of domain architecture, S4 RNA-binding spans 350 to 414; sequence ASIVQLIVKT…GKKRHALVQL (65 aa).

The protein belongs to the class-I aminoacyl-tRNA synthetase family. TyrS type 1 subfamily. In terms of assembly, homodimer.

Its subcellular location is the cytoplasm. It carries out the reaction tRNA(Tyr) + L-tyrosine + ATP = L-tyrosyl-tRNA(Tyr) + AMP + diphosphate + H(+). Catalyzes the attachment of tyrosine to tRNA(Tyr) in a two-step reaction: tyrosine is first activated by ATP to form Tyr-AMP and then transferred to the acceptor end of tRNA(Tyr). The protein is Tyrosine--tRNA ligase of Ruegeria pomeroyi (strain ATCC 700808 / DSM 15171 / DSS-3) (Silicibacter pomeroyi).